A 182-amino-acid polypeptide reads, in one-letter code: Large ribosomal subunit protein uL6 (182 aa).

It belongs to the universal ribosomal protein uL6 family. As to quaternary structure, part of the 50S ribosomal subunit.

This protein binds to the 23S rRNA, and is important in its secondary structure. It is located near the subunit interface in the base of the L7/L12 stalk, and near the tRNA binding site of the peptidyltransferase center. The protein is Large ribosomal subunit protein uL6 of Dehalococcoides mccartyi (strain CBDB1).